A 766-amino-acid chain; its full sequence is FYVE, RhoGEF and PH domain-containing protein 4 (766 aa).

Residues Met1–Asn150 are actin filament-binding. 2 stretches are compositionally biased toward polar residues: residues Leu47–Pro62 and His70–Gln85. 2 disordered regions span residues Leu47–His86 and Ile143–Gly173. The region spanning Lys206–Ala393 is the DH domain. The region spanning Glu422–Asp521 is the PH 1 domain. The FYVE-type zinc finger occupies Asp559–Ser619. Zn(2+)-binding residues include Cys565, Cys568, Cys582, Cys585, Cys590, Cys593, Cys611, and Cys614. In terms of domain architecture, PH 2 spans Asn643 to Thr740. Phosphoserine is present on residues Ser702 and Ser716. The disordered stretch occupies residues Gly746–Cys766.

Homooligomer. As to expression, detected in thymus, lung, heart, skeletal muscle, small intestine, liver, kidney, spleen and testis. Expressed in all parts of the brain and in the spinal cord at embryonic, postnatal, and adult stages. Levels of expression are lower in postnatal and adult tissues than in embryonic tissues.

The protein resides in the cytoplasm. Its subcellular location is the cytoskeleton. It localises to the cell projection. It is found in the filopodium. Its function is as follows. Activates CDC42, a member of the Ras-like family of Rho- and Rac proteins, by exchanging bound GDP for free GTP. Activates MAPK8. Plays a role in regulating the actin cytoskeleton and cell shape. Promotes the formation of lamellipodia. This chain is FYVE, RhoGEF and PH domain-containing protein 4 (Fgd4), found in Mus musculus (Mouse).